The primary structure comprises 219 residues: MKRITKLLASHSLKSLMAKKNKRSQQKNKCLKPEKDPSTVKRLLEDPPRKKRYLQPLENPPTESYGDDEKMETEEEGEKYLGKNLPASAFIIVAAERHDSDSYSETELEKKICGSVVVAKMNDDKMVSTDTKKKYFQRILSDDDKIVLLQGMVDFQNDKGTISYDDMTGFIDTVKNIISFQANSRQFTTKIRRLKDKFVQKRNKGVDENSLANVEIYEI.

The segment at 9 to 77 (ASHSLKSLMA…DEKMETEEEG (69 aa)) is disordered. Residues 17–30 (MAKKNKRSQQKNKC) show a composition bias toward basic residues. Residues 31–48 (LKPEKDPSTVKRLLEDPP) are compositionally biased toward basic and acidic residues. The segment covering 65 to 77 (YGDDEKMETEEEG) has biased composition (acidic residues).

This sequence belongs to the GeBP family.

This chain is Probable transcription factor At1g55950, found in Arabidopsis thaliana (Mouse-ear cress).